The chain runs to 902 residues: 4-hydroxyphenylacetate decarboxylase glycyl radical subunit (902 aa).

Positions 38 to 774 constitute a PFL domain; sequence KRAEDLLDVY…ATLATPDGRL (737 aa). Residues Ser-348 and Cys-507 each contribute to the 4-hydroxyphenylacetate site. Cys-507 acts as the Cysteine radical intermediate in catalysis. Catalysis depends on Glu-509, which acts as the Proton donor. His-540 and Glu-641 together coordinate 4-hydroxyphenylacetate. A Glycine radical domain is found at 782–902; that stretch reads GSVSAYAGTD…VIARTEYEGV (121 aa). Gly-877 carries the post-translational modification Glycine radical.

This sequence belongs to the glycyl radical enzyme (GRE) family. HPAD subfamily. As to quaternary structure, heterooctamer consisting of 4 large (HpdB) subunits and 4 small (HpdC) subunits. Also forms a catalytically inactive homodimer. Phosphorylated on serine. Phosphorylation may trigger the formation of the active heterooctamers and thereby regulates enzyme activity. In terms of processing, requires the activating protein HpdA to generate the key active site glycyl radical that is involved in catalysis.

It catalyses the reaction 4-hydroxyphenylacetate + H(+) = 4-methylphenol + CO2. It carries out the reaction 3,4-dihydroxyphenylacetate + H(+) = 4-methylcatechol + CO2. The catalysed reaction is 2-hydroxy-2-(4-hydroxyphenyl)acetate + H(+) = 4-hydroxybenzyl alcohol + CO2. Its activity is regulated as follows. Enzyme activity catalyzed by the HPA decarboxylase complex is rapidly and irreversibly inactivated by oxygen. Competitively inhibited by p-hydroxyphenylacetamide. Not inhibited by m- or o-hydroxyphenyl-acetate, p-hydroxybenzoate or p-hydroxyphenylpropionate. Its function is as follows. Glycyl radical subunit of the HPA decarboxylase that decarboxylates phenylacetates with a hydroxyl group in the p-position. Active toward 4-hydroxyphenylacetate, 3,4-dihydroxyphenylacetate and to a lesser extent p-hydroxymandelate (2-hydroxy-2-(4-hydroxyphenyl)acetate), forming 4-methylphenol, 4-methylcatechol and 4-hydroxybenzylalcohol, respectively. Is likely involved in the catabolism of aromatic amino acids such as tyrosine fermentation. 4-methylphenol (p-cresol) formation provides metabolic toxicity, which may benefit the pathogen C.difficile by suppression of the endogenous gastrointestinal microflora, allowing the development of gastrointestinal infections. The large subunit is the catalytic subunit that binds the substrate. In Clostridioides difficile (Peptoclostridium difficile), this protein is 4-hydroxyphenylacetate decarboxylase glycyl radical subunit.